The chain runs to 182 residues: Bifunctional dihydrofolate reductase-thymidylate synthase (182 aa).

The region spanning 1–182 is the DHFR domain; the sequence is AICACCKVLN…YFTRINNAYT (182 aa). 25 to 31 is a binding site for NADP(+); sequence GLGNAGG. Position 40 (D40) interacts with substrate. Residues 93–95 and 114–117 contribute to the NADP(+) site; these read KTS and LSRT. Positions 154, 160, and 175 each coordinate substrate. Position 155–162 (155–162) interacts with NADP(+); sequence GGASVYKE.

The protein in the N-terminal section; belongs to the dihydrofolate reductase family. It in the C-terminal section; belongs to the thymidylate synthase family. Homodimer.

The enzyme catalyses (6S)-5,6,7,8-tetrahydrofolate + NADP(+) = 7,8-dihydrofolate + NADPH + H(+). The catalysed reaction is dUMP + (6R)-5,10-methylene-5,6,7,8-tetrahydrofolate = 7,8-dihydrofolate + dTMP. It functions in the pathway cofactor biosynthesis; tetrahydrofolate biosynthesis; 5,6,7,8-tetrahydrofolate from 7,8-dihydrofolate: step 1/1. Its function is as follows. Bifunctional enzyme. Involved in de novo dTMP biosynthesis. Key enzyme in folate metabolism. Catalyzes an essential reaction for de novo glycine and purine synthesis, DNA precursor synthesis, and for the conversion of dUMP to dTMP. This is Bifunctional dihydrofolate reductase-thymidylate synthase from Plasmodium vinckei.